Reading from the N-terminus, the 152-residue chain is 3-hydroxyacyl-[acyl-carrier-protein] dehydratase FabZ (152 aa).

Histidine 54 is a catalytic residue.

This sequence belongs to the thioester dehydratase family. FabZ subfamily.

The protein localises to the cytoplasm. The enzyme catalyses a (3R)-hydroxyacyl-[ACP] = a (2E)-enoyl-[ACP] + H2O. In terms of biological role, involved in unsaturated fatty acids biosynthesis. Catalyzes the dehydration of short chain beta-hydroxyacyl-ACPs and long chain saturated and unsaturated beta-hydroxyacyl-ACPs. The sequence is that of 3-hydroxyacyl-[acyl-carrier-protein] dehydratase FabZ from Buchnera aphidicola subsp. Schizaphis graminum (strain Sg).